Consider the following 197-residue polypeptide: ATP-dependent Clp protease proteolytic subunit (197 aa).

Catalysis depends on Ser98, which acts as the Nucleophile. His123 is an active-site residue.

It belongs to the peptidase S14 family. As to quaternary structure, fourteen ClpP subunits assemble into 2 heptameric rings which stack back to back to give a disk-like structure with a central cavity, resembling the structure of eukaryotic proteasomes. Forms large heterooligomeric complexes consisting of an ATPase component (ClpX, ClpC or ClpE) and a proteolytic component (ClpP).

Its subcellular location is the cytoplasm. It catalyses the reaction Hydrolysis of proteins to small peptides in the presence of ATP and magnesium. alpha-casein is the usual test substrate. In the absence of ATP, only oligopeptides shorter than five residues are hydrolyzed (such as succinyl-Leu-Tyr-|-NHMec, and Leu-Tyr-Leu-|-Tyr-Trp, in which cleavage of the -Tyr-|-Leu- and -Tyr-|-Trp bonds also occurs).. With respect to regulation, low intrinsic peptidase activity is stimulated by ATP-binding subunits ClpC, ClpE and ClpX. Activity is disregulated by acyldepsipeptides (ADEP) antibiotics, which negate the need for ATP-binding subunits for activation and which makes it into an unregulated protease. Each ClpP subunit binds 1 ADEP molecule, which prevents binding of ClpX. ADEP binding causes conformational shifts that open the gated pore of the ring. Protease activity is inhibited by diisopropylfluoro-phosphate. Protease activity is inhibited by bortezomib, an oncology drug originally designed to work on the human proteasome. In terms of biological role, cleaves peptides in various proteins in a process that requires ATP hydrolysis. Has a limited peptidase activity in the absence of ATP-binding subunits ClpC, ClpE or ClpX. Has a chymotrypsin-like activity. Plays a major role in the degradation of misfolded proteins. ClpXP is involved in the complete degradation of the site-2 clipped anti-sigma-W factor RsiW. This results in the release of SigW and the transcriptional activation of genes under the control of the sigma-W factor. Probably the major protease that degrades proteins tagged by trans-translation. In Bacillus subtilis (strain 168), this protein is ATP-dependent Clp protease proteolytic subunit.